A 335-amino-acid polypeptide reads, in one-letter code: Basic endochitinase B (335 aa).

An N-terminal signal peptide occupies residues 1–33; that stretch reads MPPQKENHRTLNKMKTNLFLFLIFSLLLSLSSA. Residues 34–75 form the Chitin-binding type-1 domain; the sequence is EQCGRQAGGALCPNGLCCSEFGWCGNTEPYCKQPGCQSQCTP. Disulfide bonds link cysteine 36-cysteine 51, cysteine 45-cysteine 57, cysteine 50-cysteine 64, cysteine 69-cysteine 73, cysteine 107-cysteine 169, cysteine 181-cysteine 189, and cysteine 288-cysteine 320. Catalysis depends on glutamate 151, which acts as the Proton donor. Positions 329 to 335 are cleaved as a propeptide — removed in mature form; that stretch reads GLLEAAI. The short motif at 329-335 is the Vacuolar targeting signal element; it reads GLLEAAI.

This sequence belongs to the glycosyl hydrolase 19 family. Chitinase class I subfamily. As to expression, high constitutive level in roots with lower levels in leaves and flowering shoots.

It localises to the vacuole. The enzyme catalyses Random endo-hydrolysis of N-acetyl-beta-D-glucosaminide (1-&gt;4)-beta-linkages in chitin and chitodextrins.. In terms of biological role, defense against chitin-containing fungal pathogens. Seems particularly implicated in resistance to jasmonate-inducing pathogens such as A.brassicicola. In vitro antifungal activity against T.reesei, but not against A.solani, F.oxysporum, S.sclerotiorum, G.graminis and P.megasperma. The polypeptide is Basic endochitinase B (CHI-B) (Arabidopsis thaliana (Mouse-ear cress)).